A 699-amino-acid polypeptide reads, in one-letter code: Catalase-peroxidase (699 aa).

The tryptophyl-tyrosyl-methioninium (Trp-Tyr) (with M-226) cross-link spans 72–200; the sequence is WHSAGTYRIA…LAAVMMGLIY (129 aa). The active-site Proton acceptor is the H73. Residues 200–226 constitute a cross-link (tryptophyl-tyrosyl-methioninium (Tyr-Met) (with W-72)); that stretch reads YVNPEGVDGNPDPLKTAKDMRVTFARM. A heme b-binding site is contributed by H241.

This sequence belongs to the peroxidase family. Peroxidase/catalase subfamily. As to quaternary structure, homodimer or homotetramer. Heme b serves as cofactor. Formation of the three residue Trp-Tyr-Met cross-link is important for the catalase, but not the peroxidase activity of the enzyme.

It carries out the reaction H2O2 + AH2 = A + 2 H2O. The enzyme catalyses 2 H2O2 = O2 + 2 H2O. Its function is as follows. Bifunctional enzyme with both catalase and broad-spectrum peroxidase activity. The polypeptide is Catalase-peroxidase (Aeromonas salmonicida (strain A449)).